The chain runs to 938 residues: Protein translocase subunit SecA (938 aa).

ATP-binding positions include Gln-90, 108-112 (GEGKT), and Asp-504.

Belongs to the SecA family. In terms of assembly, monomer and homodimer. Part of the essential Sec protein translocation apparatus which comprises SecA, SecYEG and auxiliary proteins SecDF. Other proteins may also be involved.

It localises to the cell inner membrane. It is found in the cellular thylakoid membrane. Its subcellular location is the cytoplasm. The catalysed reaction is ATP + H2O + cellular proteinSide 1 = ADP + phosphate + cellular proteinSide 2.. Functionally, part of the Sec protein translocase complex. Interacts with the SecYEG preprotein conducting channel. Has a central role in coupling the hydrolysis of ATP to the transfer of proteins into and across the cell membrane, serving as an ATP-driven molecular motor driving the stepwise translocation of polypeptide chains across the membrane. Probably participates in protein translocation into and across both the cytoplasmic and thylakoid membranes in cyanobacterial cells. This chain is Protein translocase subunit SecA, found in Microcystis aeruginosa (strain NIES-843 / IAM M-2473).